A 396-amino-acid chain; its full sequence is Maltose/maltodextrin-binding periplasmic protein (396 aa).

Positions 1–26 (MKIKTGARILALSALTTMMFSASALA) are cleaved as a signal peptide.

It belongs to the bacterial solute-binding protein 1 family. In terms of assembly, the complex is composed of two ATP-binding proteins (MalK), two transmembrane proteins (MalG and MalF) and a solute-binding protein (MalE).

It is found in the periplasm. Its function is as follows. Part of the ABC transporter complex MalEFGK involved in maltose/maltodextrin import. Binds maltose and higher maltodextrins. The sequence is that of Maltose/maltodextrin-binding periplasmic protein (malE) from Klebsiella aerogenes (Enterobacter aerogenes).